Reading from the N-terminus, the 206-residue chain is MRRTLVLVRHGQSEWNIKNLFTGWKDPDLTEKGRTEAITAGKNLKKAGLKFDIAYTSALQRAQKTAQHILEQMAQPDLQLIKNSALNERDYGDLSGLNKDDARQRWGQEQVHIWRRSYTIAPPNGESLRDTGARVWPYYFHHIQPHILRSQTVLIVAHGNSLRALIMVLEGLSSEEIVLQELATGVPIIYEFNADSTILSKKIIQS.

Substrate-binding positions include 9-16, 22-23, Arg-61, 88-91, Lys-99, 115-116, and 159-160; these read RHGQSEWN, TG, ERDY, RR, and GN. His-10 acts as the Tele-phosphohistidine intermediate in catalysis. The Proton donor/acceptor role is filled by Glu-88.

It belongs to the phosphoglycerate mutase family. BPG-dependent PGAM subfamily. In terms of assembly, homodimer.

The enzyme catalyses (2R)-2-phosphoglycerate = (2R)-3-phosphoglycerate. It participates in carbohydrate degradation; glycolysis; pyruvate from D-glyceraldehyde 3-phosphate: step 3/5. Catalyzes the interconversion of 2-phosphoglycerate and 3-phosphoglycerate. This Bartonella bacilliformis (strain ATCC 35685 / KC583 / Herrer 020/F12,63) protein is 2,3-bisphosphoglycerate-dependent phosphoglycerate mutase.